Here is a 337-residue protein sequence, read N- to C-terminus: Adenylosuccinate synthetase (337 aa).

GTP is bound by residues 12 to 18 (GDEGKGK) and 42 to 44 (GHT). The Proton acceptor role is filled by Asp-13. Positions 13 and 42 each coordinate Mg(2+). IMP is bound by residues 13–16 (DEGK), 40–43 (NAGH), Thr-127, Arg-141, Gln-179, Thr-194, and Arg-256. Residue His-43 is the Proton donor of the active site. 252-258 (TVTGRRR) lines the substrate pocket. GTP-binding positions include Arg-258, 284 to 286 (CLD), and 324 to 326 (STG).

This sequence belongs to the adenylosuccinate synthetase family. In terms of assembly, homodimer. Mg(2+) serves as cofactor.

It localises to the cytoplasm. It carries out the reaction IMP + L-aspartate + GTP = N(6)-(1,2-dicarboxyethyl)-AMP + GDP + phosphate + 2 H(+). The protein operates within purine metabolism; AMP biosynthesis via de novo pathway; AMP from IMP: step 1/2. In terms of biological role, plays an important role in the de novo pathway of purine nucleotide biosynthesis. Catalyzes the first committed step in the biosynthesis of AMP from IMP. In Methanococcus maripaludis (strain C6 / ATCC BAA-1332), this protein is Adenylosuccinate synthetase.